Consider the following 145-residue polypeptide: Ribonuclease H (145 aa).

The RNase H type-1 domain occupies 1 to 142 (MDTPVYLYTD…ADDLANRGAA (142 aa)). Mg(2+) contacts are provided by D10, E48, D70, and D134.

This sequence belongs to the RNase H family. Monomer. It depends on Mg(2+) as a cofactor.

The protein resides in the cytoplasm. The catalysed reaction is Endonucleolytic cleavage to 5'-phosphomonoester.. Functionally, endonuclease that specifically degrades the RNA of RNA-DNA hybrids. In Neisseria meningitidis serogroup C / serotype 2a (strain ATCC 700532 / DSM 15464 / FAM18), this protein is Ribonuclease H.